A 198-amino-acid polypeptide reads, in one-letter code: Peptidyl-tRNA hydrolase (198 aa).

Residue Tyr-14 coordinates tRNA. The Proton acceptor role is filled by His-19. 3 residues coordinate tRNA: Tyr-64, Asn-66, and Asn-113.

Belongs to the PTH family. Monomer.

The protein resides in the cytoplasm. The catalysed reaction is an N-acyl-L-alpha-aminoacyl-tRNA + H2O = an N-acyl-L-amino acid + a tRNA + H(+). Its function is as follows. Hydrolyzes ribosome-free peptidyl-tRNAs (with 1 or more amino acids incorporated), which drop off the ribosome during protein synthesis, or as a result of ribosome stalling. Functionally, catalyzes the release of premature peptidyl moieties from peptidyl-tRNA molecules trapped in stalled 50S ribosomal subunits, and thus maintains levels of free tRNAs and 50S ribosomes. The sequence is that of Peptidyl-tRNA hydrolase from Acidobacterium capsulatum (strain ATCC 51196 / DSM 11244 / BCRC 80197 / JCM 7670 / NBRC 15755 / NCIMB 13165 / 161).